The primary structure comprises 1098 residues: MEDSPQGLKRSRDPDQDQDDDSGEAGKADGSGGENQERSSDQIELDDDDFQETRPKPKRSRTHPPQQNLIEVVKGNGDLISKAVKIWVERYEDSPSLATTELLSMLFQACGAKYSIKDDLLDETDVDDVVVSLVNLARAGELEDYQSSRKKELKNFKENLVSFWNNLIIECQNGPLFDRVLFDKCMDYIIALSCTPPRVYRQTATLMGLQLVTSFISVANTLGSQRETTQRQLNAESKKRADGPRVDSLNKRLSVTHEQITTLEDMMRKIFTGLFVHRYRDIDNDIRMSCIQSLGIWILSYPSLFLQDLYLKYLGWTLNDKNAGVRKASLLALQKLYEMDENVPTLGLFTQRFSNRMIEMADDVDMSAAVCAIGLVKQLLRHQLIPDDDLGPLYDLLIDQPQEIRRAIGELVYDHLIAQKFNSSPSSLTGHDDSSSEIHIFRMLQILREFSTDPILCVYVIDDVWEYMKAMKDWKCIISMLLDQNPRTGSTTDEDSTNLIRLLFVSIRKAVGEKIIPSTDNRKQYHSKAQREIFENNRKDITVAMMKNYPQLLRKFMADKAKVSSLVEIIIFMKLELYSLKRQEQSFKAAVRLIKDAFFKHGEKEALRSCVKAITFCASESKGELQDFSRGKLKDLEDELLDKITSAIREVKDGNDEYSLLVNLKRLYELQLSKPVLVESMFDEIALTLHNFRNLDEEVICFLLLNMHMYLAWYLHSIINCEAISEASLSSLISKRDTLFEELSYFLNGIEESKKYGNQLSNRICAILAETWCLFRKSNYDSGKLERLGYCPDSVFLEKFWKLCAEMFNTSDETDEEDENKEYIEETNRDVSVIAACKLVASDVVPKDYLGPEIISHLGMHGPGVTGIIKNLITFLRKKEDDISNIYLESLKRAYHRYSSELSSGREESRVDKCLEEWRELAGGLSGMYIGAARNKYRLEILSVVKEGVEFAFRDAPKQLLFLEVAILPFATRLSVSDIIDIKKDVQGRIVHVNTDEDPSGWRPCFTFLETLEEKCLKNEDLQDDKEAANVRRRGRPRKRPETERKRLFDEQSGSDEDESISGGSDREDKLDEDAPLIETIRSAARRKALKGERSKGH.

Positions 1–68 (MEDSPQGLKR…RSRTHPPQQN (68 aa)) are disordered. Positions 245–265 (RVDSLNKRLSVTHEQITTLED) form a coiled coil. The region spanning 275–360 (FVHRYRDIDN…QRFSNRMIEM (86 aa)) is the SCD domain. Coiled coils occupy residues 632 to 653 (KLKD…EVKD), 888 to 908 (LESL…GREE), and 1009 to 1032 (LETL…ANVR). The tract at residues 1027-1077 (EAANVRRRGRPRKRPETERKRLFDEQSGSDEDESISGGSDREDKLDEDAPL) is disordered. Basic and acidic residues predominate over residues 1040–1050 (RPETERKRLFD).

It belongs to the SCC3 family. As to quaternary structure, part of the cohesin complex. Interacts with DEK3. As to expression, expressed in roots, mature leaves, buds and seedlings.

The protein resides in the nucleus. The protein localises to the chromosome. Essential component of cohesin complex, a complex required for the cohesion of sister chromatids after DNA replication. The cohesin complex apparently forms a large proteinaceous ring within which sister chromatids can be trapped. At anaphase, the complex is cleaved and dissociates from chromatin, allowing sister chromatids to segregate. The cohesin complex may also play a role in spindle pole assembly during mitosis. Required for centromere cohesion maintenance at anaphase I and for the monopolar orientation of the kinetochores during both male and female meiosis. Also involved in mitosis. The sequence is that of Sister-chromatid cohesion protein 3 from Arabidopsis thaliana (Mouse-ear cress).